Here is a 129-residue protein sequence, read N- to C-terminus: Small ribosomal subunit protein uS11 (129 aa).

The protein belongs to the universal ribosomal protein uS11 family. In terms of assembly, part of the 30S ribosomal subunit. Interacts with proteins S7 and S18. Binds to IF-3.

Functionally, located on the platform of the 30S subunit, it bridges several disparate RNA helices of the 16S rRNA. Forms part of the Shine-Dalgarno cleft in the 70S ribosome. This chain is Small ribosomal subunit protein uS11, found in Geobacillus stearothermophilus (Bacillus stearothermophilus).